A 331-amino-acid polypeptide reads, in one-letter code: UPF0194 membrane protein Ent638_1286 (331 aa).

A signal peptide spans 1–16 (MKKPVVVILAVVVLLA). A coiled-coil region spans residues 107–208 (EEVAQAEAAV…LDLHDTTLIA (102 aa)).

Belongs to the UPF0194 family.

Its subcellular location is the periplasm. The chain is UPF0194 membrane protein Ent638_1286 from Enterobacter sp. (strain 638).